A 194-amino-acid polypeptide reads, in one-letter code: Homing endonuclease I-DmoI (194 aa).

Residues 14–147 form the DOD-type homing endonuclease domain; sequence LLGLIIGDGG…VSRWLNNLGV (134 aa). Catalysis depends on residues Asp21 and Glu117.

It depends on a divalent metal cation as a cofactor.

In terms of biological role, endonuclease involved in intron homing. Recognizes DNA in the 23S rRNA gene intron (minimally 5'-CCGGGTAAGTTCCGG-3'), cutting after A-8 on the top and C-11 on the bottom strand. Has a slow turnover rate, cuts the coding strand with a slight preference over the non-coding strand. In Desulfurococcus mucosus (Desulfurococcus mobilis), this protein is Homing endonuclease I-DmoI.